The primary structure comprises 341 residues: MPKRKVTFQGVGDEEDEDEIIVPKKKLVDPVAGSGGPGSRFKGKHSLDSDEEEDDDDGGSSKYDILASEDVEGQEAATLPSEGGVRITPFNLQEEMEEGHFDADGNYFLNRDAQIRDSWLDNIDWVKIRERPPGQRQASDSEEEDSLGQTSMSAQALLEGLLELLLPRETVAGALRRLGARGGGKGRKGPGQPSSPQRLDRLSGLADQMVARGNLGVYQETRERLAMRLKGLGCQTLGPHNPTPPPSLDMFAEELAEEELETPTPTQRGEAESRGDGLVDVMWEYKWENTGDAELYGPFTSAQMQTWVSEGYFPDGVYCRKLDPPGGQFYNSKRIDFDLYT.

Positions 1 to 66 are disordered; it reads MPKRKVTFQG…DGGSSKYDIL (66 aa). K26 participates in a covalent cross-link: Glycyl lysine isopeptide (Lys-Gly) (interchain with G-Cter in SUMO2). K44 carries the post-translational modification N6-acetyllysine. Residues S46, S49, and S118 each carry the phosphoserine modification. The segment covering 49–58 has biased composition (acidic residues); that stretch reads SDEEEDDDDG. 2 disordered regions span residues 131–151 and 178–199; these read RPPG…GQTS and LGAR…PQRL. Phosphoserine is present on residues S194 and S195. The region spanning 280-338 is the GYF domain; it reads DVMWEYKWENTGDAELYGPFTSAQMQTWVSEGYFPDGVYCRKLDPPGGQFYNSKRIDFD.

As to quaternary structure, component of the U5 snRNP complex composed of the U5 snRNA and at least PRPF6, PRPF8, SNRNP200, EFTUD2, SNRNP40, DDX23, TXNL4A and CD2BP2. Interacts directly with TXNL4A and PRPF6. Interacts (via GYF domain) with CD2 (via Pro-rich sequence in the cytoplasmic domain). Interacts with PQBP1.

The protein resides in the cytoplasm. It localises to the nucleus. In terms of biological role, involved in pre-mRNA splicing as component of the U5 snRNP complex that is involved in spliceosome assembly. This chain is CD2 antigen cytoplasmic tail-binding protein 2 (CD2BP2), found in Homo sapiens (Human).